A 670-amino-acid polypeptide reads, in one-letter code: uncharacterized protein (670 aa).

This is an uncharacterized protein from Ictalurid herpesvirus 1 (strain Auburn) (IcHV-1).